The primary structure comprises 452 residues: Chloride/fluoride channel protein (452 aa).

10 consecutive transmembrane segments (helical) span residues 23–43 (WLAL…LFLL), 57–77 (WVIW…HLIG), 97–117 (IVPL…HLFG), 160–180 (FASV…VLAI), 188–208 (LFPC…WGVV), 222–242 (LWSV…GLLF), 264–284 (PFAG…NHYI), 315–337 (VFTV…FYIG), 344–364 (LAPL…VAVF), and 386–408 (IAPL…GIYH).

It belongs to the chloride channel (TC 2.A.49) family.

The protein localises to the cell membrane. In terms of biological role, transports chloride and fluoride with similar efficiency. This Pseudomonas syringae pv. tomato (strain ATCC BAA-871 / DC3000) protein is Chloride/fluoride channel protein (eriC).